A 391-amino-acid polypeptide reads, in one-letter code: Putative penicillin-binding protein PbpX (391 aa).

A helical membrane pass occupies residues 21 to 40 (GKLLFGLLAVMVCITIWNAL). Residues 44-76 (SEENEPSQETAAVSNTDQKKEVKKKTAKKSEEQ) form a disordered region. Residues 50–59 (SQETAAVSNT) are compositionally biased toward polar residues.

This sequence belongs to the beta-lactamase family.

It is found in the cell membrane. This Bacillus subtilis (strain 168) protein is Putative penicillin-binding protein PbpX (pbpX).